The primary structure comprises 121 residues: Large ribosomal subunit protein uL3 (121 aa).

Gln62 carries the N5-methylglutamine modification.

It belongs to the universal ribosomal protein uL3 family. In terms of assembly, part of the 50S ribosomal subunit. Forms a cluster with proteins L14 and L19. Methylated by PrmB.

One of the primary rRNA binding proteins, it binds directly near the 3'-end of the 23S rRNA, where it nucleates assembly of the 50S subunit. In Aggregatibacter actinomycetemcomitans (Actinobacillus actinomycetemcomitans), this protein is Large ribosomal subunit protein uL3 (rplC).